The primary structure comprises 673 residues: Putative transcription factor tau subunit sfc9 (673 aa).

As to quaternary structure, may be a component of the TFIIIC complex.

The protein resides in the nucleus. The protein is Putative transcription factor tau subunit sfc9 of Schizosaccharomyces pombe (strain 972 / ATCC 24843) (Fission yeast).